Reading from the N-terminus, the 521-residue chain is MTTRLLQLTRPHYRLLSSPFRKSSIIQRQMSASSPSPANSYLNMITKSLQHNLQTWFHFEPNEIDIIESPSHFYDLLKSKISSSQKRIFIASLYLGKSETELIDCISQALSKNPDLKVSFLLDGLRGTRELPSTCSATLLSSLVAKYGSERVDCRLYKTPAYHGWKKIVVPKRFNEGLGLQHMKIYGFDNEIILSGANLSNDYFTNRQDRYYLFKSANFANYYFKLHQLISSFSYQIVKPKVAGNVNIIWPDSNPTIEPMKNKRKFLREASQLLENFLQISKHNQPISPPGQFSTIVYPISQFTPLFPKYNDKSTEKSTILSLLSNIKNTSISWTFTAGYFNILPEIKANLLATPVTEANVITASPFANGFYQSKGVSSNLPGAYLYLSKKFLQDVSRYNKDQAITLREWQRGVVNKPNGWSYHAKGIWISSRDNNDSDSWKPFITVIGSSNYTRRAYSLDLESNALIITKDEELRNKMKGELNDLLQYTKPVTLEDFKSDPERHVGTGVKIATSVLGKKL.

91–98 (ASLYLGKS) lines the ATP pocket. 2 PLD phosphodiesterase domains span residues 177–203 (GLGL…SNDY) and 419–457 (NGWS…TRRA). Active-site residues include His-182, Lys-184, and Asp-189.

It belongs to the CDP-alcohol phosphatidyltransferase class-II family.

The protein resides in the mitochondrion. The catalysed reaction is a CDP-1,2-diacyl-sn-glycerol + sn-glycerol 3-phosphate = a 1,2-diacyl-sn-glycero-3-phospho-(1'-sn-glycero-3'-phosphate) + CMP + H(+). Its pathway is phospholipid metabolism; phosphatidylglycerol biosynthesis; phosphatidylglycerol from CDP-diacylglycerol: step 1/2. In terms of biological role, essential for the viability of mitochondrial petite mutant. Catalyzes the committed step to the synthesis of the acidic phospholipids. The sequence is that of CDP-diacylglycerol--glycerol-3-phosphate 3-phosphatidyltransferase (PGS1) from Saccharomyces pastorianus (Lager yeast).